A 67-amino-acid chain; its full sequence is Vespin (67 aa).

The N-terminal stretch at 1–21 is a signal peptide; sequence MHPIIWELSHMVDLQAAAQKL.

As to expression, expressed by the venom gland.

The protein resides in the secreted. Shows contractile activity on isolated ileum smooth muscle. This is Vespin from Vespa magnifica (Hornet).